Consider the following 360-residue polypeptide: Peptide chain release factor 1 (360 aa).

Gln-234 carries the post-translational modification N5-methylglutamine.

It belongs to the prokaryotic/mitochondrial release factor family. Methylated by PrmC. Methylation increases the termination efficiency of RF1.

It localises to the cytoplasm. Functionally, peptide chain release factor 1 directs the termination of translation in response to the peptide chain termination codons UAG and UAA. This is Peptide chain release factor 1 from Clostridium botulinum (strain Eklund 17B / Type B).